Consider the following 474-residue polypeptide: Probable protein phosphatase 2C 37 (474 aa).

The disordered stretch occupies residues 1–90; sequence MVMASAGVNM…RDDDGCSSTA (90 aa). The span at 57–77 shows a compositional bias: low complexity; sequence LPASSASPSPSPTSSAASSDC. Residues 113 to 470 form the PPM-type phosphatase domain; sequence AFGSVSLAGR…DNISVVVIDL (358 aa). The Mn(2+) site is built by Asp-152, Gly-153, and Asp-387. The disordered stretch occupies residues 406-434; that stretch reads LEDGSPTSGRRAARSGEAASSSAGAPAAA. Residues 420–434 are compositionally biased toward low complexity; sequence SGEAASSSAGAPAAA. Residue Asp-461 coordinates Mn(2+).

The protein belongs to the PP2C family. It depends on Mg(2+) as a cofactor. Mn(2+) is required as a cofactor.

It catalyses the reaction O-phospho-L-seryl-[protein] + H2O = L-seryl-[protein] + phosphate. The enzyme catalyses O-phospho-L-threonyl-[protein] + H2O = L-threonyl-[protein] + phosphate. The sequence is that of Probable protein phosphatase 2C 37 from Oryza sativa subsp. japonica (Rice).